Consider the following 185-residue polypeptide: Ribosome-recycling factor (185 aa).

It belongs to the RRF family.

The protein localises to the cytoplasm. In terms of biological role, responsible for the release of ribosomes from messenger RNA at the termination of protein biosynthesis. May increase the efficiency of translation by recycling ribosomes from one round of translation to another. The protein is Ribosome-recycling factor of Chloroflexus aggregans (strain MD-66 / DSM 9485).